Reading from the N-terminus, the 2424-residue chain is Voltage-dependent P/Q-type calcium channel subunit alpha-1A (2424 aa).

At Met1–Pro98 the chain is on the cytoplasmic side. Residues Asn85 to Phe363 form an I repeat. Residues Pro99–Leu117 form a helical membrane-spanning segment. At Glu118–Asp135 the chain is on the extracellular side. A helical membrane pass occupies residues Thr136–Leu155. Residues Gly156–Asn167 are Cytoplasmic-facing. The chain crosses the membrane as a helical span at residues Gly168 to Val185. Topologically, residues Gly186–Asp190 are extracellular. The chain crosses the membrane as a helical span at residues Leu191 to Ile209. Residues Pro210–Gln228 lie on the Cytoplasmic side of the membrane. A helical membrane pass occupies residues Ile229–Tyr248. Residues Met249–Trp335 lie on the Extracellular side of the membrane. Asn283 carries an N-linked (GlcNAc...) asparagine glycan. Glu318 lines the Ca(2+) pocket. A helical membrane pass occupies residues Asn336–Ser360. The Cytoplasmic portion of the chain corresponds to Gly361–Gln487. Residues Gln383–Glu400 are binding to the beta subunit. Thr409 carries the post-translational modification Phosphothreonine. Residues Ser448 and Ser451 each carry the phosphoserine modification. Residues Glu473–Leu717 form an II repeat. Residues Ala488–Ile506 traverse the membrane as a helical segment. Topologically, residues Val507–Tyr521 are extracellular. The chain crosses the membrane as a helical span at residues Ala522–Leu541. At Gly542–Ser549 the chain is on the cytoplasmic side. The chain crosses the membrane as a helical span at residues Ser550 to Trp568. Over Ala569–Gly578 the chain is Extracellular. Residues Ile579–Trp597 form a helical membrane-spanning segment. Residues Ala598–Ser616 lie on the Cytoplasmic side of the membrane. A helical membrane pass occupies residues Leu617–Phe636. The Extracellular portion of the chain corresponds to Gly637–Val689. Glu668 contributes to the Ca(2+) binding site. Residues Phe690–Val714 form a helical membrane-spanning segment. Over Asp715–Arg1253 the chain is Cytoplasmic. 3 positions are modified to phosphoserine: Ser750, Ser753, and Ser790. The disordered stretch occupies residues His819–Pro1229. 3 stretches are compositionally biased toward basic and acidic residues: residues Glu893–Gly912, Glu922–Pro931, and Arg969–Glu996. A compositionally biased stretch (polar residues) spans Pro1053–Leu1065. Phosphoserine is present on residues Ser1091 and Ser1104. Low complexity predominate over residues Ser1110–Asn1140. The span at Glu1151–Lys1168 shows a compositional bias: polar residues. Residues Leu1204 to Glu1214 are compositionally biased toward basic and acidic residues. The stretch at Asn1240 to Phe1523 is one III repeat. Residues Tyr1254–Ala1272 traverse the membrane as a helical segment. Topologically, residues Glu1273–Tyr1288 are extracellular. Residues Phe1289–Leu1308 form a helical membrane-spanning segment. Residues Gly1309 to Asp1320 are Cytoplasmic-facing. A helical membrane pass occupies residues Leu1321–Phe1339. Over Thr1340–Thr1350 the chain is Extracellular. Residues Ile1351–Leu1369 form a helical membrane-spanning segment. Residues Pro1370–Asn1388 are Cytoplasmic-facing. The chain crosses the membrane as a helical span at residues Ile1389–Phe1408. Residues Lys1409–Glu1495 lie on the Extracellular side of the membrane. Residue Glu1469 coordinates Ca(2+). The helical transmembrane segment at Met1496–Ile1520 threads the bilayer. Residues Ile1521 to Pro1575 are Cytoplasmic-facing. The IV repeat unit spans residues Asn1560–Phe1823. Residues Pro1576–Asp1604 traverse the membrane as a helical segment. Topologically, residues Asn1605–Val1609 are extracellular. The chain crosses the membrane as a helical span at residues Phe1610–Phe1629. Topologically, residues Gly1630–Asp1637 are cytoplasmic. The helical transmembrane segment at Ala1638 to Val1656 threads the bilayer. Residues Thr1657–Asn1665 lie on the Extracellular side of the membrane. Asn1665 is a glycosylation site (N-linked (GlcNAc...) asparagine). Residues Leu1666 to Gly1684 traverse the membrane as a helical segment. The Cytoplasmic segment spans residues Tyr1685–Tyr1703. Residues Val1704–Phe1723 form a helical membrane-spanning segment. Residues Gly1724–Phe1795 are Extracellular-facing. A helical membrane pass occupies residues Ala1796–Met1820. Over Asp1821 to Pro2424 the chain is Cytoplasmic. Thr1993 carries the post-translational modification Phosphothreonine. Positions Phe1997 to Pro2424 are disordered. Residues Ser2037–Trp2053 show a composition bias toward polar residues. 6 positions are modified to phosphoserine: Ser2054, Ser2072, Ser2084, Ser2086, Ser2127, and Ser2148. Basic and acidic residues predominate over residues Glu2074–Leu2090. 2 stretches are compositionally biased toward basic and acidic residues: residues Arg2142 to Arg2159 and Pro2200 to Arg2210. Over residues Pro2211–Gly2229 the composition is skewed to basic residues. Over residues Val2249–His2262 the composition is skewed to low complexity. The segment covering Arg2280–Arg2305 has biased composition (basic residues).

It belongs to the calcium channel alpha-1 subunit (TC 1.A.1.11) family. CACNA1A subfamily. In terms of assembly, voltage-dependent calcium channels are multisubunit complexes, consisting of alpha-1, alpha-2, beta and delta subunits in a 1:1:1:1 ratio. The channel activity is directed by the pore-forming and voltage-sensitive alpha-1 subunit. In many cases, this subunit is sufficient to generate voltage-sensitive calcium channel activity. The auxiliary subunits beta and alpha-2/delta linked by a disulfide bridge regulate the channel activity. Interacts with CABP1. Interacts with the spider omega-agatoxin-IVA (AC P30288). Interacts with TSPOAP1. As to expression, brain specific. Purkinje cells contain predominantly P-type VSCC, the Q-type being a prominent calcium current in cerebellar granule cells.

The protein localises to the cell membrane. The catalysed reaction is Ca(2+)(in) = Ca(2+)(out). Voltage-sensitive calcium channels (VSCC) mediate the entry of calcium ions into excitable cells and are also involved in a variety of calcium-dependent processes, including muscle contraction, hormone or neurotransmitter release, gene expression, cell motility, cell division and cell death. The isoform alpha-1A gives rise to P and/or Q-type calcium currents. P/Q-type calcium channels belong to the 'high-voltage activated' (HVA) group and are specifically blocked by the spider omega-agatoxin-IVA (AC P54282). They are however insensitive to dihydropyridines (DHP). The protein is Voltage-dependent P/Q-type calcium channel subunit alpha-1A (CACNA1A) of Oryctolagus cuniculus (Rabbit).